The chain runs to 171 residues: ATP synthase subunit b (171 aa).

Residues 19 to 39 traverse the membrane as a helical segment; sequence VGVGLILFIAIVIWAKAPAMI.

This sequence belongs to the ATPase B chain family. As to quaternary structure, F-type ATPases have 2 components, F(1) - the catalytic core - and F(0) - the membrane proton channel. F(1) has five subunits: alpha(3), beta(3), gamma(1), delta(1), epsilon(1). F(0) has three main subunits: a(1), b(2) and c(10-14). The alpha and beta chains form an alternating ring which encloses part of the gamma chain. F(1) is attached to F(0) by a central stalk formed by the gamma and epsilon chains, while a peripheral stalk is formed by the delta and b chains.

The protein localises to the cell inner membrane. Its function is as follows. F(1)F(0) ATP synthase produces ATP from ADP in the presence of a proton or sodium gradient. F-type ATPases consist of two structural domains, F(1) containing the extramembraneous catalytic core and F(0) containing the membrane proton channel, linked together by a central stalk and a peripheral stalk. During catalysis, ATP synthesis in the catalytic domain of F(1) is coupled via a rotary mechanism of the central stalk subunits to proton translocation. Component of the F(0) channel, it forms part of the peripheral stalk, linking F(1) to F(0). The chain is ATP synthase subunit b from Caulobacter sp. (strain K31).